The sequence spans 454 residues: Probable glycine dehydrogenase (decarboxylating) subunit 1 (454 aa).

Belongs to the GcvP family. N-terminal subunit subfamily. In terms of assembly, the glycine cleavage system is composed of four proteins: P, T, L and H. In this organism, the P 'protein' is a heterodimer of two subunits.

The enzyme catalyses N(6)-[(R)-lipoyl]-L-lysyl-[glycine-cleavage complex H protein] + glycine + H(+) = N(6)-[(R)-S(8)-aminomethyldihydrolipoyl]-L-lysyl-[glycine-cleavage complex H protein] + CO2. Its function is as follows. The glycine cleavage system catalyzes the degradation of glycine. The P protein binds the alpha-amino group of glycine through its pyridoxal phosphate cofactor; CO(2) is released and the remaining methylamine moiety is then transferred to the lipoamide cofactor of the H protein. This is Probable glycine dehydrogenase (decarboxylating) subunit 1 from Sorangium cellulosum (strain So ce56) (Polyangium cellulosum (strain So ce56)).